The primary structure comprises 186 residues: uncharacterized protein (186 aa).

A run of 4 helical transmembrane segments spans residues 5–25 (LIAC…FEDI), 39–59 (IITI…KLFA), 62–82 (NLLF…ILLF), and 122–142 (GFFE…IALM).

The protein localises to the cell membrane. This is an uncharacterized protein from Borreliella burgdorferi (strain ATCC 35210 / DSM 4680 / CIP 102532 / B31) (Borrelia burgdorferi).